The sequence spans 336 residues: UDP-N-acetylenolpyruvoylglucosamine reductase (336 aa).

An FAD-binding PCMH-type domain is found at 1 to 178; sequence MAHSLQTLHT…TTVHLALPKE (178 aa). Residue arginine 154 is part of the active site. Serine 222 functions as the Proton donor in the catalytic mechanism. The active site involves glutamate 318.

It belongs to the MurB family. FAD is required as a cofactor.

It localises to the cytoplasm. The catalysed reaction is UDP-N-acetyl-alpha-D-muramate + NADP(+) = UDP-N-acetyl-3-O-(1-carboxyvinyl)-alpha-D-glucosamine + NADPH + H(+). It functions in the pathway cell wall biogenesis; peptidoglycan biosynthesis. Functionally, cell wall formation. This Pseudoalteromonas translucida (strain TAC 125) protein is UDP-N-acetylenolpyruvoylglucosamine reductase.